We begin with the raw amino-acid sequence, 86 residues long: Small ribosomal subunit protein bS20 (86 aa).

It belongs to the bacterial ribosomal protein bS20 family.

Functionally, binds directly to 16S ribosomal RNA. The polypeptide is Small ribosomal subunit protein bS20 (Kocuria rhizophila (strain ATCC 9341 / DSM 348 / NBRC 103217 / DC2201)).